A 410-amino-acid polypeptide reads, in one-letter code: BTB and MATH domain-containing protein 42 (410 aa).

Residues 1–19 (MSSRSSWSSTEQINRTISS) show a composition bias toward polar residues. A disordered region spans residues 1-29 (MSSRSSWSSTEQINRTISSRADDLPPQPR). Residues 45 to 173 (STKLEWKIEQ…DGTLFLICEV (129 aa)) form the MATH domain. Residues 219–287 (TDCVIHVGNK…MYTGATESLE (69 aa)) enclose the BTB domain. A disordered region spans residues 389–410 (TSNIPISVSPPPARKRLRRSAK). Over residues 401–410 (ARKRLRRSAK) the composition is skewed to basic residues.

In terms of assembly, interacts with cul-3.

Its pathway is protein modification; protein ubiquitination. Probable substrate-specific adapter of an E3 ubiquitin-protein ligase complex which mediates the ubiquitination and subsequent proteasomal degradation of target proteins. The polypeptide is BTB and MATH domain-containing protein 42 (bath-42) (Caenorhabditis elegans).